Consider the following 499-residue polypeptide: FAD-dependent oxidoreductase domain-containing protein 1 (499 aa).

Residues 75-95 traverse the membrane as a helical segment; the sequence is ERADVVIVGGGVMGWSIAYWL.

It depends on FAD as a cofactor.

It is found in the mitochondrion inner membrane. Required for the assembly of the mitochondrial membrane respiratory chain NADH dehydrogenase (Complex I). Involved in mid-late stages of complex I assembly. The protein is FAD-dependent oxidoreductase domain-containing protein 1 (foxred1) of Xenopus laevis (African clawed frog).